We begin with the raw amino-acid sequence, 122 residues long: Large ribosomal subunit protein uL14 (122 aa).

It belongs to the universal ribosomal protein uL14 family. As to quaternary structure, part of the 50S ribosomal subunit. Forms a cluster with proteins L3 and L19. In the 70S ribosome, L14 and L19 interact and together make contacts with the 16S rRNA in bridges B5 and B8.

Functionally, binds to 23S rRNA. Forms part of two intersubunit bridges in the 70S ribosome. In Kosmotoga olearia (strain ATCC BAA-1733 / DSM 21960 / TBF 19.5.1), this protein is Large ribosomal subunit protein uL14.